The sequence spans 162 residues: NADH-quinone oxidoreductase subunit I (162 aa).

2 4Fe-4S ferredoxin-type domains span residues 53-83 and 93-122; these read LRRYPNGEERCIACKLCEAVCPALAITIEAE and TRYDIDMTKCIYCGLCQEACPVDAIVEGPN. Positions 63, 66, 69, 73, 102, 105, 108, and 112 each coordinate [4Fe-4S] cluster.

It belongs to the complex I 23 kDa subunit family. As to quaternary structure, NDH-1 is composed of 14 different subunits. Subunits NuoA, H, J, K, L, M, N constitute the membrane sector of the complex. It depends on [4Fe-4S] cluster as a cofactor.

Its subcellular location is the cell inner membrane. The catalysed reaction is a quinone + NADH + 5 H(+)(in) = a quinol + NAD(+) + 4 H(+)(out). Its function is as follows. NDH-1 shuttles electrons from NADH, via FMN and iron-sulfur (Fe-S) centers, to quinones in the respiratory chain. The immediate electron acceptor for the enzyme in this species is believed to be ubiquinone. Couples the redox reaction to proton translocation (for every two electrons transferred, four hydrogen ions are translocated across the cytoplasmic membrane), and thus conserves the redox energy in a proton gradient. The sequence is that of NADH-quinone oxidoreductase subunit I from Rhodospirillum centenum (strain ATCC 51521 / SW).